A 111-amino-acid polypeptide reads, in one-letter code: Cell cycle protein GpsB (111 aa).

A coiled-coil region spans residues 32 to 63; the sequence is LDDIMKDYDAYEAIIKELKGEIARLKAQAANS. Positions 59 to 80 are disordered; sequence QAANSPKTTLPTEESNDVLRTE. Polar residues predominate over residues 60 to 71; that stretch reads AANSPKTTLPTE.

The protein belongs to the GpsB family. Forms polymers through the coiled coil domains. Interacts with PBP1, MreC and EzrA.

The protein resides in the cytoplasm. In terms of biological role, divisome component that associates with the complex late in its assembly, after the Z-ring is formed, and is dependent on DivIC and PBP2B for its recruitment to the divisome. Together with EzrA, is a key component of the system that regulates PBP1 localization during cell cycle progression. Its main role could be the removal of PBP1 from the cell pole after pole maturation is completed. Also contributes to the recruitment of PBP1 to the division complex. Not essential for septum formation. In Streptococcus suis (strain 98HAH33), this protein is Cell cycle protein GpsB.